The following is a 189-amino-acid chain: GTPase NRas (189 aa).

10 to 17 (GAGGVGKS) serves as a coordination point for GTP. The Effector region motif lies at 32–40 (YDPTIEDSY). GTP-binding positions include 57–61 (DTAGQ) and 116–119 (NKCD). The hypervariable region stretch occupies residues 166 to 185 (YRMKKLDSSEDNNQGCIRIP). The S-palmitoyl cysteine moiety is linked to residue Cys181. Cys186 carries the S-farnesyl cysteine lipid modification. The propeptide at 187–189 (KLM) is removed in mature form.

The protein belongs to the small GTPase superfamily. Ras family. Post-translationally, palmitoylated by the ZDHHC9-GOLGA7 complex. Depalmitoylated by abhd17a, abhd17b and abhd17c. A continuous cycle of de- and re-palmitoylation regulates rapid exchange between plasma membrane and Golgi.

The protein resides in the cell membrane. Its subcellular location is the golgi apparatus membrane. The catalysed reaction is GTP + H2O = GDP + phosphate + H(+). Alternates between an inactive form bound to GDP and an active form bound to GTP. Activated by a guanine nucleotide-exchange factor (GEF) and inactivated by a GTPase-activating protein (GAP). In terms of biological role, ras proteins bind GDP/GTP and possess intrinsic GTPase activity. The protein is GTPase NRas (nras) of Xenopus laevis (African clawed frog).